The following is an 83-amino-acid chain: Salivary thrombin inhibitor anophelin (83 aa).

The N-terminal stretch at 1-22 (MANKLVLISLLCVVLVAKITQA) is a signal peptide. The interval 25–51 (QYAPGDEPSYDEDTDDSDKLVENDTSI) is disordered. N47 carries N-linked (GlcNAc...) asparagine glycosylation. The interval 54 to 83 (EDYAAIEASLSETFNTAADPGRRLGEGSKP) is sufficient for host thrombin inhibition. A blocks exosite I of host thrombin region spans residues 56-62 (YAAIEAS). The tract at residues 64 to 83 (SETFNTAADPGRRLGEGSKP) is disordered. The tract at residues 72-75 (DPGR) is blocks active site cleft of host thrombin in a reverse direction compared to substrates. The segment covering 73–83 (PGRRLGEGSKP) has biased composition (basic and acidic residues).

Belongs to the anophelin family. In terms of assembly, interacts with human F2 (thrombin); the interaction results in thrombin inhibition. In terms of tissue distribution, salivary gland (at protein level).

The protein localises to the secreted. Its activity is regulated as follows. Increasing concentration of NaCl decreases affinity for thrombin. Functionally, salivary protein with anticoagulant activity that inhibits host thrombin (F2); binds to the proteinase in a reverse orientation (opposite to substrates). Inhibits thrombin-induced platelet aggregation. The sequence is that of Salivary thrombin inhibitor anophelin from Anopheles albimanus (New world malaria mosquito).